The following is an 80-amino-acid chain: Exodeoxyribonuclease 7 small subunit (80 aa).

The protein belongs to the XseB family. In terms of assembly, heterooligomer composed of large and small subunits.

The protein resides in the cytoplasm. The catalysed reaction is Exonucleolytic cleavage in either 5'- to 3'- or 3'- to 5'-direction to yield nucleoside 5'-phosphates.. Its function is as follows. Bidirectionally degrades single-stranded DNA into large acid-insoluble oligonucleotides, which are then degraded further into small acid-soluble oligonucleotides. In Rickettsia conorii (strain ATCC VR-613 / Malish 7), this protein is Exodeoxyribonuclease 7 small subunit.